Consider the following 228-residue polypeptide: Cytidylate kinase (228 aa).

17 to 25 (GPTASGKGT) is an ATP binding site.

The protein belongs to the cytidylate kinase family. Type 1 subfamily.

The protein localises to the cytoplasm. It carries out the reaction CMP + ATP = CDP + ADP. It catalyses the reaction dCMP + ATP = dCDP + ADP. This is Cytidylate kinase from Burkholderia ambifaria (strain MC40-6).